A 240-amino-acid polypeptide reads, in one-letter code: Uridylate kinase (240 aa).

Position 12–15 (Lys12–Gly15) interacts with ATP. An involved in allosteric activation by GTP region spans residues Gly20 to Gly25. Gly54 provides a ligand contact to UMP. Residues Gly55 and Arg59 each contribute to the ATP site. UMP is bound by residues Asp74 and Thr135 to Thr142. ATP-binding residues include Asn163, Tyr169, and Asp172.

It belongs to the UMP kinase family. Homohexamer.

It is found in the cytoplasm. It catalyses the reaction UMP + ATP = UDP + ADP. Its pathway is pyrimidine metabolism; CTP biosynthesis via de novo pathway; UDP from UMP (UMPK route): step 1/1. Allosterically activated by GTP. Inhibited by UTP. Its function is as follows. Catalyzes the reversible phosphorylation of UMP to UDP. The protein is Uridylate kinase of Bacillus anthracis.